A 660-amino-acid polypeptide reads, in one-letter code: DNA mismatch repair protein MutL (660 aa).

This sequence belongs to the DNA mismatch repair MutL/HexB family.

Functionally, this protein is involved in the repair of mismatches in DNA. It is required for dam-dependent methyl-directed DNA mismatch repair. May act as a 'molecular matchmaker', a protein that promotes the formation of a stable complex between two or more DNA-binding proteins in an ATP-dependent manner without itself being part of a final effector complex. The protein is DNA mismatch repair protein MutL of Streptococcus pyogenes serotype M1.